A 335-amino-acid chain; its full sequence is MAADHTDVLIVGAGPAGLFAGFYVGMRGLSFRFVDPLPEPGGQLTALYPEKYIYDVAGFPKVYAKDLVKGLVEQVAPFNPVYSLGERAETLEREGDLFKVTTSQGNAYTAKAVIIAAGVGAFEPRRIGAPGEREFEGRGVYYAVKSKAEFQGKRVLIVGGGDSAVDWALNLLDTARRITLIHRRPQFRAHEASVKELMKAHEEGRLEVLTPYELRRVEGDERVRWAVVFHNQTQEELALEVDAVLILAGYITKLGPLANWGLALEKNKIKVDTTMATSIPGVYACGDIVTYPGKLPLIVLGFGEAAIAANHAAAYANPALKVNPGHSSEKAAPGT.

Asp-35, Gln-43, Tyr-48, Ala-88, Phe-122, Asp-287, and Ser-328 together coordinate FAD.

The protein belongs to the ferredoxin--NADP reductase type 2 family. In terms of assembly, homodimer. The cofactor is FAD.

It carries out the reaction 2 reduced [2Fe-2S]-[ferredoxin] + NADP(+) + H(+) = 2 oxidized [2Fe-2S]-[ferredoxin] + NADPH. This chain is Ferredoxin--NADP reductase, found in Thermus thermophilus (strain ATCC BAA-163 / DSM 7039 / HB27).